A 203-amino-acid chain; its full sequence is Pyridoxine/pyridoxamine 5'-phosphate oxidase (203 aa).

Residues 50-55, 65-66, K72, and Q94 each bind FMN; these read RMVLLK and YT. K55 lines the substrate pocket. Y112, R116, and S120 together coordinate substrate. Residues 129–130 and W174 contribute to the FMN site; that span reads QS. 180 to 182 serves as a coordination point for substrate; sequence RLH. Position 184 (R184) interacts with FMN.

The protein belongs to the pyridoxamine 5'-phosphate oxidase family. As to quaternary structure, homodimer. Requires FMN as cofactor.

The catalysed reaction is pyridoxamine 5'-phosphate + O2 + H2O = pyridoxal 5'-phosphate + H2O2 + NH4(+). It catalyses the reaction pyridoxine 5'-phosphate + O2 = pyridoxal 5'-phosphate + H2O2. The protein operates within cofactor metabolism; pyridoxal 5'-phosphate salvage; pyridoxal 5'-phosphate from pyridoxamine 5'-phosphate: step 1/1. It functions in the pathway cofactor metabolism; pyridoxal 5'-phosphate salvage; pyridoxal 5'-phosphate from pyridoxine 5'-phosphate: step 1/1. Catalyzes the oxidation of either pyridoxine 5'-phosphate (PNP) or pyridoxamine 5'-phosphate (PMP) into pyridoxal 5'-phosphate (PLP). The protein is Pyridoxine/pyridoxamine 5'-phosphate oxidase of Brucella anthropi (strain ATCC 49188 / DSM 6882 / CCUG 24695 / JCM 21032 / LMG 3331 / NBRC 15819 / NCTC 12168 / Alc 37) (Ochrobactrum anthropi).